The sequence spans 461 residues: Photosystem II CP43 reaction center protein (461 aa).

Residues 1 to 2 (ME) constitute a propeptide that is removed on maturation. An N-acetylthreonine modification is found at T3. A Phosphothreonine modification is found at T3. Helical transmembrane passes span 57-81 (LFEVAHFVPEKPMYEQGLILLPHLA), 122-143 (LLGPETLEESFPFFGYVWKDRN), 166-188 (KALYFGGVYDTWAPGGGDVRKIT), 243-263 (KPFAWARRALVWSGEAYLSYS), and 279-300 (WFNNTAYPSEFYGPTGPEASQA). E355 provides a ligand contact to [CaMn4O5] cluster. The chain crosses the membrane as a helical span at residues 435 to 459 (RARAAAAGFEKGIDRDFEPVLSMTP).

The protein belongs to the PsbB/PsbC family. PsbC subfamily. PSII is composed of 1 copy each of membrane proteins PsbA, PsbB, PsbC, PsbD, PsbE, PsbF, PsbH, PsbI, PsbJ, PsbK, PsbL, PsbM, PsbT, PsbX, PsbY, PsbZ, Psb30/Ycf12, at least 3 peripheral proteins of the oxygen-evolving complex and a large number of cofactors. It forms dimeric complexes. Requires Binds multiple chlorophylls and provides some of the ligands for the Ca-4Mn-5O cluster of the oxygen-evolving complex. It may also provide a ligand for a Cl- that is required for oxygen evolution. PSII binds additional chlorophylls, carotenoids and specific lipids. as cofactor.

The protein resides in the plastid. The protein localises to the chloroplast thylakoid membrane. Functionally, one of the components of the core complex of photosystem II (PSII). It binds chlorophyll and helps catalyze the primary light-induced photochemical processes of PSII. PSII is a light-driven water:plastoquinone oxidoreductase, using light energy to abstract electrons from H(2)O, generating O(2) and a proton gradient subsequently used for ATP formation. In Nicotiana sylvestris (Wood tobacco), this protein is Photosystem II CP43 reaction center protein.